The chain runs to 60 residues: Small, acid-soluble spore protein C2 (60 aa).

This sequence belongs to the alpha/beta-type SASP family. SASP are degraded in the first minutes of spore germination and provide amino acids for both new protein synthesis and metabolism.

SASP are bound to spore DNA. They are double-stranded DNA-binding proteins that cause DNA to change to an a-like conformation. They protect the DNA backbone from chemical and enzymatic cleavage and are thus involved in dormant spore's high resistance to UV light. In Clostridium perfringens (strain 13 / Type A), this protein is Small, acid-soluble spore protein C2 (sspC2).